The following is a 276-amino-acid chain: MANYTAADIKALRERTGAGMLDVKKALDEADGDAQKAQEIIRVKGLKGVTKREGRSTAEGIVLARTENNVGYMVEVNSETDFVAKSAPFVEFGNKVLDAAVAADAADLDALLAAEVDGKPISELVTETGALLGEKVVVRRVARVAGDHVAVYLHKTSKDLPAQVGVLLAVSGADAETAAHDVAVHIAAMSPAFLSEEDVPAETVENEKRVAEETARNEGKPEKIIPNIVQGRLKGYYKDVVLVDQDFAKDSKKSVGQVLSEAGATATAFARFRVGA.

The tract at residues 80 to 83 (TDFV) is involved in Mg(2+) ion dislocation from EF-Tu.

The protein belongs to the EF-Ts family.

Its subcellular location is the cytoplasm. Functionally, associates with the EF-Tu.GDP complex and induces the exchange of GDP to GTP. It remains bound to the aminoacyl-tRNA.EF-Tu.GTP complex up to the GTP hydrolysis stage on the ribosome. This Kocuria rhizophila (strain ATCC 9341 / DSM 348 / NBRC 103217 / DC2201) protein is Elongation factor Ts.